The chain runs to 504 residues: Arabinose import ATP-binding protein AraG (504 aa).

ABC transporter domains are found at residues 8-243 (LSFR…MVGR) and 256-499 (YGEE…MPKV). 40 to 47 (GENGAGKS) contributes to the ATP binding site.

This sequence belongs to the ABC transporter superfamily. Arabinose importer (TC 3.A.1.2.2) family. In terms of assembly, the complex is composed of two ATP-binding proteins (AraG), two transmembrane proteins (AraH) and a solute-binding protein (AraF).

It is found in the cell inner membrane. The enzyme catalyses L-arabinose(out) + ATP + H2O = L-arabinose(in) + ADP + phosphate + H(+). Functionally, part of the ABC transporter complex AraFGH involved in arabinose import. Responsible for energy coupling to the transport system. This chain is Arabinose import ATP-binding protein AraG, found in Escherichia coli (strain UTI89 / UPEC).